The sequence spans 529 residues: Bifunctional purine biosynthesis protein PurH (529 aa).

An MGS-like domain is found at 1–146; it reads MAPTALLSVS…KNHAHVAVLT (146 aa).

It belongs to the PurH family.

It catalyses the reaction (6R)-10-formyltetrahydrofolate + 5-amino-1-(5-phospho-beta-D-ribosyl)imidazole-4-carboxamide = 5-formamido-1-(5-phospho-D-ribosyl)imidazole-4-carboxamide + (6S)-5,6,7,8-tetrahydrofolate. The enzyme catalyses IMP + H2O = 5-formamido-1-(5-phospho-D-ribosyl)imidazole-4-carboxamide. It participates in purine metabolism; IMP biosynthesis via de novo pathway; 5-formamido-1-(5-phospho-D-ribosyl)imidazole-4-carboxamide from 5-amino-1-(5-phospho-D-ribosyl)imidazole-4-carboxamide (10-formyl THF route): step 1/1. It functions in the pathway purine metabolism; IMP biosynthesis via de novo pathway; IMP from 5-formamido-1-(5-phospho-D-ribosyl)imidazole-4-carboxamide: step 1/1. The polypeptide is Bifunctional purine biosynthesis protein PurH (Synechococcus sp. (strain CC9311)).